A 974-amino-acid chain; its full sequence is Translation initiation factor IF-2 (974 aa).

Residues 31–376 (FVKSASSTVE…APAVGGVRLP (346 aa)) are disordered. Over residues 52 to 68 (PSAKSADSAARPAAKPG) the composition is skewed to low complexity. Residues 83 to 96 (GPRPGPKPAAPAPA) show a composition bias toward pro residues. The segment covering 97 to 133 (APAAAAPAATPAAQAPAPAAPAASTATPAAPASNAPK) has biased composition (low complexity). Positions 134-147 (PGRPTPAAPAPAAP) are enriched in pro residues. Composition is skewed to low complexity over residues 148-166 (AAPA…STGA) and 179-191 (RVGN…APAE). Composition is skewed to pro residues over residues 195-210 (PRPA…PRPA) and 253-266 (RPSP…PNPG). Residues 267 to 277 (AMPARSARPAP) are compositionally biased toward low complexity. Positions 279–332 (GRPGRPGGAPGGRPGGGGGGYRGGGAPGAGAGAPGGGAPAGGFRGRPGGGGRPG) are enriched in gly residues. A compositionally biased stretch (basic residues) spans 349–358 (RRGRKSKRQK). Positions 470–641 (SRPPVVTVMG…AVLLTADAAL (172 aa)) constitute a tr-type G domain. The tract at residues 479–486 (GHVDHGKT) is G1. 479–486 (GHVDHGKT) contacts GTP. The segment at 504-508 (GITQH) is G2. Residues 529–532 (DTPG) are G3. GTP is bound by residues 529 to 533 (DTPGH) and 583 to 586 (NKID). The tract at residues 583 to 586 (NKID) is G4. A G5 region spans residues 619 to 621 (SAK).

Belongs to the TRAFAC class translation factor GTPase superfamily. Classic translation factor GTPase family. IF-2 subfamily.

It is found in the cytoplasm. In terms of biological role, one of the essential components for the initiation of protein synthesis. Protects formylmethionyl-tRNA from spontaneous hydrolysis and promotes its binding to the 30S ribosomal subunits. Also involved in the hydrolysis of GTP during the formation of the 70S ribosomal complex. In Rhodococcus opacus (strain B4), this protein is Translation initiation factor IF-2.